The following is a 123-amino-acid chain: Holo-[acyl-carrier-protein] synthase (123 aa).

Mg(2+) contacts are provided by D8 and E56.

It belongs to the P-Pant transferase superfamily. AcpS family. Mg(2+) is required as a cofactor.

Its subcellular location is the cytoplasm. It carries out the reaction apo-[ACP] + CoA = holo-[ACP] + adenosine 3',5'-bisphosphate + H(+). Functionally, transfers the 4'-phosphopantetheine moiety from coenzyme A to a Ser of acyl-carrier-protein. The protein is Holo-[acyl-carrier-protein] synthase of Clostridium botulinum (strain Eklund 17B / Type B).